The chain runs to 766 residues: Serine/threonine-protein kinase B-raf (766 aa).

Residues 1 to 13 (MAALSGGGGGGAE) are compositionally biased toward gly residues. Residues 1-38 (MAALSGGGGGGAEPGQALFNGDMEPEAGAGAGAAASSA) are disordered. Ala2 carries the N-acetylalanine modification. Ser151 carries the phosphoserine modification. Residues 155-227 (PIVRVFLPNK…TGEELHVEVL (73 aa)) form the RBD domain. The segment at 234–280 (THNFVRKTFFTLAFCDFCRKLLFQGFRCQTCGYKFHQRCSTEVPLMC) adopts a Phorbol-ester/DAG-type zinc-finger fold. 8 residues coordinate Zn(2+): His235, Cys248, Cys251, Cys261, Cys264, His269, Cys272, and Cys280. The tract at residues 308–454 (AETALTSGSS…DSSDDWEIPD (147 aa)) is disordered. Residues 314–341 (SGSSPSAPASDSIGPQILTSPSPSKSIP) show a composition bias toward low complexity. Position 333 is a phosphoserine (Ser333). Over residues 348-363 (PADEDHRNQFGQRDRS) the composition is skewed to basic and acidic residues. At Ser365 the chain carries Phosphoserine; by SGK1. Residue Thr373 is modified to Phosphothreonine; by autocatalysis. Thr396 carries the post-translational modification Phosphothreonine. Ser399 carries the post-translational modification Phosphoserine. Thr401 carries the phosphothreonine modification. The span at 423 to 447 (QRERKSSSSSEDRNRMKTLGRRDSS) shows a compositional bias: basic and acidic residues. Residues Ser446 and Ser447 each carry the phosphoserine modification. A Protein kinase domain is found at 457–717 (ITVGQRIGSG…PQILASIELL (261 aa)). ATP contacts are provided by residues 463–471 (IGSGSFGTV) and Lys483. Asp576 (proton acceptor) is an active-site residue. A Glycyl lysine isopeptide (Lys-Gly) (interchain with G-Cter in ubiquitin) cross-link involves residue Lys578. Arg671 is subject to Omega-N-methylarginine; by PRMT5. Phosphoserine occurs at positions 729 and 750. Thr753 is modified (phosphothreonine; by MAPK1).

The protein belongs to the protein kinase superfamily. TKL Ser/Thr protein kinase family. RAF subfamily. As to quaternary structure, monomer. Homodimer. Heterodimerizes with RAF1, and the heterodimer possesses a highly increased kinase activity compared to the respective homodimers or monomers. Heterodimerization is mitogen-regulated and enhanced by 14-3-3 proteins. MAPK1/ERK2 activation can induce a negative feedback that promotes the dissociation of the heterodimer by phosphorylating BRAF at Thr-753. Heterodimerizes (via N-terminus) with KSR1 (via N-terminus) or KSR2 (via N-terminus) in a MAP2K1-dependent manner. Interacts with MAP2K1 and MAP2K2. Found in a complex with at least BRAF, HRAS, MAP2K1, MAPK3 and RGS14. Interacts with RIT1. Interacts (via N-terminus) with RGS14 (via RBD domains); the interaction mediates the formation of a ternary complex with RAF1, a ternary complex inhibited by GNAI1. Interacts with DGKH. Interacts with PRMT5. Interacts with KSR2. Interacts with AKAP13, MAP2K1 and KSR1. Identified in a complex with AKAP13, MAP2K1 and KSR1. Interacts with FNIP1 and FNIP2. Requires Zn(2+) as cofactor. Post-translationally, phosphorylation at Ser-365 by SGK1 inhibits its activity. Phosphorylation at Thr-753 by MAPK1. Dephosphorylation of Ser-365 by the SHOC2-MRAS-PP1c (SMP) complex consisting of SHOC2, GTP-bound M-Ras/MRAS and the catalytic subunit of protein phosphatase 1 (PPP1CA, PPP1CB or PPP1CC); this relieves inactivation and stimulates kinase activity. Methylation at Arg-671 decreases stability and kinase activity. In terms of processing, ubiquitinated by RNF149; which leads to proteasomal degradation. Polyubiquitinated at Lys-578 in response to EGF. Brain and testis.

The protein localises to the nucleus. Its subcellular location is the cytoplasm. It localises to the cell membrane. The enzyme catalyses L-seryl-[protein] + ATP = O-phospho-L-seryl-[protein] + ADP + H(+). It catalyses the reaction L-threonyl-[protein] + ATP = O-phospho-L-threonyl-[protein] + ADP + H(+). With respect to regulation, in quiescent cells, maintained in an inactive state via an intramolecular interaction between the protein kinase and N-terminal domains. Following mitogen-mediated cell activation, binds via its RGB domain to active HRAS (GTP-bound) which releases the inhibitory intramolecular interaction between the two domains. This allows the MAP2K1-mediated dimerization of KSR1 or KSR2, and BRAF which activates BRAF. Its function is as follows. Protein kinase involved in the transduction of mitogenic signals from the cell membrane to the nucleus. Phosphorylates MAP2K1, and thereby activates the MAP kinase signal transduction pathway. Phosphorylates PFKFB2. May play a role in the postsynaptic responses of hippocampal neurons. The protein is Serine/threonine-protein kinase B-raf of Homo sapiens (Human).